Consider the following 469-residue polypeptide: Collagenase 3 (469 aa).

The N-terminal stretch at 1-17 is a signal peptide; the sequence is SSLSVLVLSLSFAYCLS. Residues 18–100 constitute a propeptide, activation peptide; sequence APVPQDEDSE…QPRCGVPDVG (83 aa). Positions 92–99 match the Cysteine switch motif; sequence PRCGVPDV. C94 contacts Zn(2+). N115 carries N-linked (GlcNAc...) asparagine glycosylation. A Ca(2+)-binding site is contributed by D126. N150 is a glycosylation site (N-linked (GlcNAc...) asparagine). D160 is a Ca(2+) binding site. Residues H170 and D172 each contribute to the Zn(2+) site. 3 residues coordinate Ca(2+): D177, G178, and L182. H185 serves as a coordination point for Zn(2+). Residues G194 and D196 each coordinate Ca(2+). H198 is a Zn(2+) binding site. Residues D200, D201, and E203 each coordinate Ca(2+). Residue H220 coordinates Zn(2+). The active site involves E221. Positions 224, 230, and 238 each coordinate Zn(2+). Positions 266–469 are interaction with collagen; it reads PGNRDPHPKH…ILKTNFVLMC (204 aa). 4 Hemopexin repeats span residues 279–328, 329–375, 377–425, and 426–469; these read PEKC…WPEL, PNKL…GFPK, LKAI…FPGI, and GEKV…VLMC. A disulfide bond links C282 and C469. Residues D289, I291, D333, A335, A383, and D430 each coordinate Ca(2+).

Belongs to the peptidase M10A family. It depends on Ca(2+) as a cofactor. Requires Zn(2+) as cofactor. The proenzyme is activated by removal of the propeptide; this cleavage can be effected by other matrix metalloproteinases and may involve several cleavage steps. Cleavage can also be autocatalytic, after partial maturation by another protease or after treatment with 4-aminophenylmercuric acetate (APMA) (in vitro).

The protein localises to the secreted. It localises to the extracellular space. It is found in the extracellular matrix. In terms of biological role, plays a role in the degradation of extracellular matrix proteins including fibrillar collagen, fibronectin, TNC and ACAN. Cleaves several types of triple helical collagen. May also function by activating or degrading key regulatory proteins. Plays a role in wound healing, tissue remodeling, cartilage degradation, bone development, bone mineralization and ossification. The sequence is that of Collagenase 3 (mmp13) from Xenopus laevis (African clawed frog).